Reading from the N-terminus, the 271-residue chain is Dehydrodolichyl diphosphate synthase 7 (271 aa).

A helical transmembrane segment spans residues 24-41 (FLFRVLCVGPIPTNISFI).

This sequence belongs to the UPP synthase family. It depends on Mg(2+) as a cofactor.

It is found in the endoplasmic reticulum membrane. The protein operates within protein modification; protein glycosylation. Functionally, catalyzes cis-prenyl chain elongation to produce the polyprenyl backbone of dolichol, a glycosyl carrier-lipid required for the biosynthesis of several classes of glycoprotein. This is Dehydrodolichyl diphosphate synthase 7 from Arabidopsis thaliana (Mouse-ear cress).